Consider the following 299-residue polypeptide: Tyrosine recombinase XerC (299 aa).

Positions 1 to 85 (MEQHLDAYCM…AVRGFYKYLN (85 aa)) constitute a Core-binding (CB) domain. The Tyr recombinase domain occupies 106-285 (RLPKTLDTDR…DFQHLATVYD (180 aa)). Active-site residues include Arg146, Lys170, His237, Arg240, and His263. The O-(3'-phospho-DNA)-tyrosine intermediate role is filled by Tyr272.

The protein belongs to the 'phage' integrase family. XerC subfamily. In terms of assembly, forms a cyclic heterotetrameric complex composed of two molecules of XerC and two molecules of XerD.

The protein localises to the cytoplasm. Site-specific tyrosine recombinase, which acts by catalyzing the cutting and rejoining of the recombining DNA molecules. The XerC-XerD complex is essential to convert dimers of the bacterial chromosome into monomers to permit their segregation at cell division. It also contributes to the segregational stability of plasmids. The chain is Tyrosine recombinase XerC from Pseudomonas syringae pv. tomato (strain ATCC BAA-871 / DC3000).